Consider the following 186-residue polypeptide: Transposons Tn1721 resolvase (186 aa).

Residues 4–137 form the Resolvase/invertase-type recombinase catalytic domain; that stretch reads HRIGYVRVSS…EGIALAKQRG (134 aa). The active-site O-(5'-phospho-DNA)-serine intermediate is the Ser-12. Positions 164 to 183 form a DNA-binding region, H-T-H motif; sequence KAQLAREFNISRETLYQYLR.

The protein belongs to the site-specific recombinase resolvase family.

In terms of biological role, resolvase catalyzes the resolution (a site-specific recombination) of the cointegrated replicon to yield the final transposition products. The polypeptide is Transposons Tn1721 resolvase (tnpR) (Escherichia coli).